A 303-amino-acid polypeptide reads, in one-letter code: Serine/threonine-protein phosphatase PP-X homolog 1 (303 aa).

Positions 51, 53, 79, and 111 each coordinate Mn(2+). H112 functions as the Proton donor in the catalytic mechanism. H161 and H235 together coordinate Mn(2+).

Belongs to the PPP phosphatase family. PP-4 (PP-X) subfamily. Mn(2+) is required as a cofactor.

It carries out the reaction O-phospho-L-seryl-[protein] + H2O = L-seryl-[protein] + phosphate. The enzyme catalyses O-phospho-L-threonyl-[protein] + H2O = L-threonyl-[protein] + phosphate. The protein is Serine/threonine-protein phosphatase PP-X homolog 1 (Ppx1) of Paramecium tetraurelia.